Reading from the N-terminus, the 300-residue chain is Ribosomal RNA small subunit methyltransferase H (300 aa).

S-adenosyl-L-methionine contacts are provided by residues 46-48, aspartate 65, phenylalanine 92, aspartate 107, and glutamine 114; that span reads GGH.

The protein belongs to the methyltransferase superfamily. RsmH family.

It is found in the cytoplasm. It carries out the reaction cytidine(1402) in 16S rRNA + S-adenosyl-L-methionine = N(4)-methylcytidine(1402) in 16S rRNA + S-adenosyl-L-homocysteine + H(+). In terms of biological role, specifically methylates the N4 position of cytidine in position 1402 (C1402) of 16S rRNA. The sequence is that of Ribosomal RNA small subunit methyltransferase H from Prochlorococcus marinus subsp. pastoris (strain CCMP1986 / NIES-2087 / MED4).